The following is a 693-amino-acid chain: MAREFSLEKTRNIGIMAHVDAGKTTTTERILYYTGKIHKIGETHEGASQMDWMEQEQERGITITSAATTAQWKGYRVNIIDTPGHVDFTIEVQRSLRVLDGAVTVLDSQSGVEPQTETVWRQATEYKVPRIVFCNKMDKIGADFFYSVESLHDRLQANAHPIQIPIGAEEDFTGIIDLIKMKAEIYTNDLGTDIQETDIPEDYLEKAQEWREKLVEAVAETDEDLMMKYLEGEEITEEELVAGIRQATINVEFFPVLAGSAFKNKGVQLMLDAVLDYLPSPLDIDAIKGIDTKTDEETTRPADDEAPFASLAFKVMTDPFVGRLTFFRVYSGVLESGSYVLNASKGKKERIGRILQMHANTRQEIDKVYSGDIAAAVGLKDTTTGDTLCALDAPVILESIEFPDPVIQVAVEPKSKADQDKMGVALQKLAEEDPSFRVETNVETGETVISGMGELHLDVLVDRMKREFKVEANVGAPQVSYRETFRAATKAEGKFVRQSGGKGQYGHVWVEFTPNEEGKGFEFENAIVGGVVPREYIPAVEKGLEDSMNNGVLAGYPLVDIKAKLYDGSYHDVDSNETAFRVAASMALKAAAKNANPVILEPMMKVTITVPEDYLGDIMGHVTSRRGRVEGMEAHGNSQIVNAMVPLAEMFGYATTLRSATQGRGTFMMVFDHYEDVPKSVQEEIIKKNGGNA.

The 275-residue stretch at 8 to 282 (EKTRNIGIMA…AVLDYLPSPL (275 aa)) folds into the tr-type G domain. GTP-binding positions include 17–24 (AHVDAGKT), 81–85 (DTPGH), and 135–138 (NKMD).

Belongs to the TRAFAC class translation factor GTPase superfamily. Classic translation factor GTPase family. EF-G/EF-2 subfamily.

The protein resides in the cytoplasm. In terms of biological role, catalyzes the GTP-dependent ribosomal translocation step during translation elongation. During this step, the ribosome changes from the pre-translocational (PRE) to the post-translocational (POST) state as the newly formed A-site-bound peptidyl-tRNA and P-site-bound deacylated tRNA move to the P and E sites, respectively. Catalyzes the coordinated movement of the two tRNA molecules, the mRNA and conformational changes in the ribosome. This is Elongation factor G from Enterococcus faecalis (strain ATCC 700802 / V583).